The following is a 142-amino-acid chain: Transcription antitermination protein NusB (142 aa).

This sequence belongs to the NusB family.

Its function is as follows. Involved in transcription antitermination. Required for transcription of ribosomal RNA (rRNA) genes. Binds specifically to the boxA antiterminator sequence of the ribosomal RNA (rrn) operons. This is Transcription antitermination protein NusB from Borreliella burgdorferi (strain ATCC 35210 / DSM 4680 / CIP 102532 / B31) (Borrelia burgdorferi).